Consider the following 136-residue polypeptide: Ribonuclease P protein component (136 aa).

Belongs to the RnpA family. Consists of a catalytic RNA component (M1 or rnpB) and a protein subunit.

It carries out the reaction Endonucleolytic cleavage of RNA, removing 5'-extranucleotides from tRNA precursor.. In terms of biological role, RNaseP catalyzes the removal of the 5'-leader sequence from pre-tRNA to produce the mature 5'-terminus. It can also cleave other RNA substrates such as 4.5S RNA. The protein component plays an auxiliary but essential role in vivo by binding to the 5'-leader sequence and broadening the substrate specificity of the ribozyme. This chain is Ribonuclease P protein component, found in Burkholderia mallei (strain NCTC 10247).